Reading from the N-terminus, the 712-residue chain is uncharacterized protein (712 aa).

Disordered regions lie at residues 1–46, 107–264, and 370–389; these read MAKI…NNLN, NIKP…IPQA, and QPQH…QQNQ. Low complexity-rich tracts occupy residues 10-46, 107-143, and 161-173; these read INNS…NNLN, NIKP…SNSS, and TFDN…NSSN. A compositionally biased stretch (polar residues) spans 178–187; sequence ISPTTSPQLE. Low complexity-rich tracts occupy residues 188 to 198 and 241 to 264; these read QHQQYQQQQHQ and PLQQ…IPQA.

This is an uncharacterized protein from Dictyostelium discoideum (Social amoeba).